A 480-amino-acid polypeptide reads, in one-letter code: Protein nucleotidyltransferase YdiU (480 aa).

Gly86, Gly88, Arg89, Lys109, Asp121, Gly122, Arg172, and Arg179 together coordinate ATP. The active-site Proton acceptor is the Asp248. Mg(2+) is bound by residues Asn249 and Asp258. Position 258 (Asp258) interacts with ATP.

This sequence belongs to the SELO family. Mg(2+) is required as a cofactor. The cofactor is Mn(2+).

It carries out the reaction L-seryl-[protein] + ATP = 3-O-(5'-adenylyl)-L-seryl-[protein] + diphosphate. The catalysed reaction is L-threonyl-[protein] + ATP = 3-O-(5'-adenylyl)-L-threonyl-[protein] + diphosphate. It catalyses the reaction L-tyrosyl-[protein] + ATP = O-(5'-adenylyl)-L-tyrosyl-[protein] + diphosphate. The enzyme catalyses L-histidyl-[protein] + UTP = N(tele)-(5'-uridylyl)-L-histidyl-[protein] + diphosphate. It carries out the reaction L-seryl-[protein] + UTP = O-(5'-uridylyl)-L-seryl-[protein] + diphosphate. The catalysed reaction is L-tyrosyl-[protein] + UTP = O-(5'-uridylyl)-L-tyrosyl-[protein] + diphosphate. Nucleotidyltransferase involved in the post-translational modification of proteins. It can catalyze the addition of adenosine monophosphate (AMP) or uridine monophosphate (UMP) to a protein, resulting in modifications known as AMPylation and UMPylation. The sequence is that of Protein nucleotidyltransferase YdiU from Salmonella paratyphi B (strain ATCC BAA-1250 / SPB7).